The sequence spans 248 residues: Anamorsin homolog (248 aa).

The interval 4–130 (FKGLQKSLYI…ETGSSARLSF (127 aa)) is N-terminal SAM-like domain. The segment at 131 to 161 (AKKTSSVNVWKISGDDEELIDEEELLDEEDK) is linker. The [2Fe-2S] cluster site is built by Cys-172, Cys-181, Cys-184, and Cys-186. Positions 172-186 (CSTTGKRKACKNCSC) are fe-S binding site A. Positions 209, 212, 220, and 223 each coordinate [4Fe-4S] cluster. Short sequence motifs (cx2C motif) lie at residues 209 to 212 (CGNC) and 220 to 223 (CSTC). Residues 209 to 223 (CGNCYLGDAFRCSTC) are fe-S binding site B.

This sequence belongs to the anamorsin family. Monomer. The cofactor is [2Fe-2S] cluster. It depends on [4Fe-4S] cluster as a cofactor.

Its subcellular location is the cytoplasm. The protein localises to the mitochondrion intermembrane space. Its function is as follows. Component of the cytosolic iron-sulfur (Fe-S) protein assembly (CIA) machinery. Required for the maturation of extramitochondrial Fe-S proteins. Part of an electron transfer chain functioning in an early step of cytosolic Fe-S biogenesis, facilitating the de novo assembly of a [4Fe-4S] cluster on the cytosolic Fe-S scaffold complex. Electrons are transferred from NADPH via a FAD- and FMN-containing diflavin oxidoreductase. Together with the diflavin oxidoreductase, also required for the assembly of the diferric tyrosyl radical cofactor of ribonucleotide reductase (RNR), probably by providing electrons for reduction during radical cofactor maturation in the catalytic small subunit. The protein is Anamorsin homolog of Drosophila virilis (Fruit fly).